Here is a 444-residue protein sequence, read N- to C-terminus: MMEFFPEIPKIQFEGKESTNPLAFKFYDPNEVIDGKPLKDHLKFSVAFWHTFVNEGRDPFGDPTAERPWNRFSDPMDKAFARVDALFEFCEKLNIEYFCFHDRDIAPEGKTLRETNKILDKVVERIKERMKDSNVKLLWGTANLFSHPRYMHGAATTCSADVFAYAAAQVKKALEITKELGGEGYVFWGGREGYETLLNTDLGLELENLARFLRMAVEYAKKIGFTGQFLIEPKPKEPTKHQYDFDVATAYAFLKNHGLDEYFKFNIEANHATLAGHTFQHELRMARILGKLGSIDANQGDLLLGWDTDQFPTNIYDTTLAMYEVIKAGGFTKGGLNFDAKVRRASYKVEDLFIGHIAGMDTFALGFKIAYKLAKDGVFDKFIEEKYRSFKEGIGKEIVEGKTDFEKLEEYIIDKEDIELPSGKQEYLESLLNSYIVKTIAELR.

Active-site residues include His101 and Asp104. Residues Glu232, Glu268, His271, Asp296, Asp307, Asp309, and Asp339 each coordinate Mg(2+).

It belongs to the xylose isomerase family. As to quaternary structure, homotetramer. The cofactor is Mg(2+).

It localises to the cytoplasm. It catalyses the reaction alpha-D-xylose = alpha-D-xylulofuranose. The sequence is that of Xylose isomerase from Thermotoga sp. (strain RQ2).